Reading from the N-terminus, the 121-residue chain is Large ribosomal subunit protein uL14c (121 aa).

This sequence belongs to the universal ribosomal protein uL14 family. Part of the 50S ribosomal subunit.

Its subcellular location is the plastid. It localises to the chloroplast. Functionally, binds to 23S rRNA. This Emiliania huxleyi (Coccolithophore) protein is Large ribosomal subunit protein uL14c.